The chain runs to 222 residues: MSTPRQILAAIFDMDGLLIDSEPLWDRAELDVMASLGVDISRRNELPDTLGLRIDMVVDLWYARQPWNGPSRQEVVERVIARAISLVEETRPLLPGVREAVALCKEQGLLVGLASASPLHMLEKVLTMFDLRDSFDALASAEKLPYSKPHPQVYLDCAAKLGVDPLTCVALEDSVNGMIASKAARMRSIVVPAPEAQNDPRFVLANVKLSSLTELTAKDLLG.

Asp-13 (nucleophile) is an active-site residue. A divalent metal cation contacts are provided by Asp-13 and Asp-15. Substrate-binding positions include 13 to 15 (DMD), 115 to 116 (SA), and Lys-148. The active-site Proton donor is Asp-15. Asp-173 lines the a divalent metal cation pocket.

It belongs to the HAD-like hydrolase superfamily. CbbY/CbbZ/Gph/YieH family. Mg(2+) is required as a cofactor. It depends on Mn(2+) as a cofactor. The cofactor is Co(2+). Requires Zn(2+) as cofactor.

It catalyses the reaction sugar phosphate + H2O = sugar + phosphate.. The enzyme catalyses 2-deoxy-D-glucose 6-phosphate + H2O = 2-deoxy-D-glucose + phosphate. The catalysed reaction is D-mannitol 1-phosphate + H2O = D-mannitol + phosphate. It carries out the reaction D-sorbitol 6-phosphate + H2O = D-sorbitol + phosphate. Its function is as follows. Sugar-phosphate phosphohydrolase that catalyzes the dephosphorylation of D-mannitol 1-phosphate and D-sorbitol 6-phosphate. Also catalyzes the dephosphorylation of 2-deoxyglucose 6-phosphate (2dGlu6P); this is a biologically important activity in vivo since it contributes to the elimination of this toxic compound and plays an important role in the resistance of E.coli to 2-deoxyglucose. In Escherichia coli O157:H7, this protein is Hexitol phosphatase B.